We begin with the raw amino-acid sequence, 264 residues long: Caffeoyl-CoA O-methyltransferase 2 (264 aa).

Positions 1–20 (MATTATEATKTTAPAQEQQA) are enriched in low complexity. The interval 1 to 37 (MATTATEATKTTAPAQEQQANGNGNGEQKTRHSEVGH) is disordered. The span at 28 to 37 (QKTRHSEVGH) shows a compositional bias: basic and acidic residues. A substrate-binding site is contributed by Lys38. S-adenosyl-L-methionine-binding positions include Thr80, Glu102, 104 to 105 (GV), Ser110, Asp128, and Ala157. Asp180 contacts substrate. A divalent metal cation is bound at residue Asp180. Asp182 is a binding site for S-adenosyl-L-methionine. Asp206 and Asn207 together coordinate a divalent metal cation. Asn211 is a substrate binding site.

It belongs to the class I-like SAM-binding methyltransferase superfamily. Cation-dependent O-methyltransferase family. CCoAMT subfamily. Requires a divalent metal cation as cofactor.

The catalysed reaction is (E)-caffeoyl-CoA + S-adenosyl-L-methionine = (E)-feruloyl-CoA + S-adenosyl-L-homocysteine + H(+). Its pathway is aromatic compound metabolism; phenylpropanoid biosynthesis. Functionally, methylates caffeoyl-CoA to feruloyl-CoA and 5-hydroxyferuloyl-CoA to sinapoyl-CoA. Plays a role in the synthesis of feruloylated polysaccharides. Involved in the reinforcement of the plant cell wall. Also involved in the responding to wounding or pathogen challenge by the increased formation of cell wall-bound ferulic acid polymers. The sequence is that of Caffeoyl-CoA O-methyltransferase 2 (CCOAOMT2) from Zea mays (Maize).